Here is a 795-residue protein sequence, read N- to C-terminus: Glutamine--tRNA ligase, cytoplasmic (795 aa).

The interval 188 to 220 is disordered; it reads ADNEKPTKKKEKKEKPAKVEEKKAVVETTAEPS. Over residues 200-212 the composition is skewed to basic and acidic residues; sequence KEKPAKVEEKKAV. The 'HIGH' region signature appears at 277–287; sequence PEPNGYLHIGH. ATP-binding positions include 278–280 and 284–290; these read EPN and HIGHAKA. The L-glutamine site is built by D310 and Y450. ATP-binding positions include T469, 498–499, and 506–508; these read RL and MSK. Positions 505–509 match the 'KMSKS' region motif; sequence VMSKR.

This sequence belongs to the class-I aminoacyl-tRNA synthetase family.

The protein resides in the cytoplasm. The protein localises to the cytosol. The enzyme catalyses tRNA(Gln) + L-glutamine + ATP = L-glutaminyl-tRNA(Gln) + AMP + diphosphate. The protein is Glutamine--tRNA ligase, cytoplasmic of Arabidopsis thaliana (Mouse-ear cress).